The chain runs to 265 residues: Transcription factor BHLH062 (265 aa).

The disordered stretch occupies residues 1–26; it reads MVPRDRVNAAAAGGGGEGRLVQSGIV. The basic motif; degenerate stretch occupies residues 35–48; that stretch reads PKRIHKSEREKLKR. In terms of domain architecture, bHLH spans 35–85; that stretch reads PKRIHKSEREKLKRDKQNDLFNELGNLLEPDRQNNGKACVLGETTRILKDL. Residues 49 to 85 are helix-loop-helix motif; it reads DKQNDLFNELGNLLEPDRQNNGKACVLGETTRILKDL. Positions 75-130 form a coiled coil; the sequence is LGETTRILKDLLSQVESLRKENSSLKNESHYVALERNELHDDNSMLRTEILELQNE. Residues 200 to 265 are disordered; it reads ESATSEDSEP…TNEEDRIGRS (66 aa). A compositionally biased stretch (basic and acidic residues) spans 210–220; sequence SQEHGISDHVT. Polar residues predominate over residues 245-256; that stretch reads QDQQCSSGTSGT.

It belongs to the bHLH protein family. In terms of assembly, interacts with TIFY11A/JAZ9.

Its subcellular location is the nucleus. Transcription factor that plays a positive role in salt stress tolerance. Interacts with TIFY11A/JAZ9 and binds to the promoter of some potassium ion transporter genes to regulate potassium homeostasis during salt stress. The sequence is that of Transcription factor BHLH062 from Oryza sativa subsp. japonica (Rice).